The chain runs to 195 residues: Peptidyl-tRNA hydrolase (195 aa).

Residue Y17 coordinates tRNA. Catalysis depends on H22, which acts as the Proton acceptor. Positions 68, 70, and 116 each coordinate tRNA.

This sequence belongs to the PTH family. In terms of assembly, monomer.

Its subcellular location is the cytoplasm. It carries out the reaction an N-acyl-L-alpha-aminoacyl-tRNA + H2O = an N-acyl-L-amino acid + a tRNA + H(+). Functionally, hydrolyzes ribosome-free peptidyl-tRNAs (with 1 or more amino acids incorporated), which drop off the ribosome during protein synthesis, or as a result of ribosome stalling. Catalyzes the release of premature peptidyl moieties from peptidyl-tRNA molecules trapped in stalled 50S ribosomal subunits, and thus maintains levels of free tRNAs and 50S ribosomes. The polypeptide is Peptidyl-tRNA hydrolase (Shewanella frigidimarina (strain NCIMB 400)).